We begin with the raw amino-acid sequence, 129 residues long: 3-oxo-4,17-pregnadiene-20-carboxyl-CoA hydratase beta subunit (129 aa).

It belongs to the thioester dehydratase family. Heterodimer composed of ChsH1 and ChsH2. Two heterodimers combine to form a heterotetramer. The complex interacts with Ltp2 via the DUF35 C-terminal region of ChsH2. The ChsH1-ChsH2-Ltp2 protein complex is composed of two protomers that form a heterohexameric structure through the Ltp2 dimerization interface.

It catalyses the reaction 3-oxochola-4,17-dien-22-oyl-CoA + H2O = 17-hydroxy-3-oxochol-4-en-22-oyl-CoA. The enzyme catalyses (2E)-octenoyl-CoA + H2O = 3-hydroxyoctanoyl-CoA. The catalysed reaction is (2E)-decenoyl-CoA + H2O = 3-hydroxydecanoyl-CoA. Its pathway is steroid metabolism; cholesterol degradation. With respect to regulation, in the absence of the Ltp2 aldolase, ChsH1/ChsH2 can hydrate only about 30% of the 3-OPDC-CoA substrate. Complete turnover requires the presence of Ltp2. Involved in cholesterol side chain degradation. Catalyzes the hydration of 3-oxo-4,17-pregnadiene-20-carboxyl-CoA (3-OPDC-CoA) to form 17-hydroxy-3-oxo-4-pregnene-20-carboxyl-CoA (17-HOPC-CoA), in the modified beta-oxidation pathway for cholesterol side chain degradation. Can also use octenoyl-CoA and decenoyl-CoA, with lower efficiency. This Mycobacterium tuberculosis (strain ATCC 25618 / H37Rv) protein is 3-oxo-4,17-pregnadiene-20-carboxyl-CoA hydratase beta subunit.